The chain runs to 493 residues: Cobyric acid synthase (493 aa).

The GATase cobBQ-type domain maps to 246–440 (PIDIAVIKMP…IHGVFDGIVF (195 aa)). Cys-326 acts as the Nucleophile in catalysis. Residue His-432 is part of the active site.

It belongs to the CobB/CobQ family. CobQ subfamily.

Its pathway is cofactor biosynthesis; adenosylcobalamin biosynthesis. Its function is as follows. Catalyzes amidations at positions B, D, E, and G on adenosylcobyrinic A,C-diamide. NH(2) groups are provided by glutamine, and one molecule of ATP is hydrogenolyzed for each amidation. The sequence is that of Cobyric acid synthase from Clostridium botulinum (strain 657 / Type Ba4).